Consider the following 157-residue polypeptide: Small ribosomal subunit protein uS7 (157 aa).

The protein belongs to the universal ribosomal protein uS7 family. As to quaternary structure, part of the 30S ribosomal subunit. Contacts proteins S9 and S11.

Functionally, one of the primary rRNA binding proteins, it binds directly to 16S rRNA where it nucleates assembly of the head domain of the 30S subunit. Is located at the subunit interface close to the decoding center, probably blocks exit of the E-site tRNA. This chain is Small ribosomal subunit protein uS7, found in Koribacter versatilis (strain Ellin345).